We begin with the raw amino-acid sequence, 68 residues long: MLCLPVFIILLLLASPAAPKSLETRIQNDLIRAGLTDADLKTEKGFLSGLLNVADSVCCKVDTSCCSN.

A signal peptide spans 1 to 19 (MLCLPVFIILLLLASPAAP). Residues 20–54 (KSLETRIQNDLIRAGLTDADLKTEKGFLSGLLNVA) constitute a propeptide that is removed on maturation.

It belongs to the conotoxin T superfamily. Contains 2 disulfide bonds that can be either 'C1-C3, C2-C4' or 'C1-C4, C2-C3', since these disulfide connectivities have been observed for conotoxins with cysteine framework V (for examples, see AC P0DQQ7 and AC P81755). Expressed by the venom duct.

The protein resides in the secreted. The chain is Conotoxin Lt5.11 from Conus litteratus (Lettered cone).